A 729-amino-acid chain; its full sequence is Rho GTPase-activating protein 28 (729 aa).

Disordered regions lie at residues 20–42 and 55–105; these read AQPPNAESRCAPRAAASHPLSRK and SNES…AEVT. A compositionally biased stretch (polar residues) spans 65 to 75; sequence SRSNSEASVDS. Ser72 is modified (phosphoserine). Over residues 80 to 89 the composition is skewed to basic and acidic residues; that stretch reads DFWREIESIK. Thr159 bears the Phosphothreonine mark. A disordered region spans residues 176 to 236; sequence GVSESPPRDT…SQDKEGSFAV (61 aa). The span at 195 to 204 shows a compositional bias: basic and acidic residues; sequence GTKEERELPR. Residues 217 to 226 are compositionally biased toward polar residues; that stretch reads SLNSTTLSDA. Residues 380–577 enclose the Rho-GAP domain; sequence VPLTVLLDGD…LMLKYQKILW (198 aa). The interval 612–631 is disordered; that stretch reads TLERETASPKTSKVLQKSPS. The segment covering 619–630 has biased composition (polar residues); it reads SPKTSKVLQKSP.

Expressed in testis. Expressed at moderate level in kidney and ovary, and weakly expressed in spleen and skeletal muscle.

Functionally, GTPase activator for the Rho-type GTPases by converting them to an inactive GDP-bound state. The protein is Rho GTPase-activating protein 28 (ARHGAP28) of Homo sapiens (Human).